The primary structure comprises 138 residues: Basic phospholipase A2 DsM-b1/DsM-b1' (138 aa).

The first 16 residues, 1 to 16 (MRTLWIVAMCLIGVEG), serve as a signal peptide directing secretion. Intrachain disulfides connect Cys-42/Cys-131, Cys-44/Cys-60, Cys-59/Cys-111, Cys-65/Cys-138, Cys-66/Cys-104, Cys-73/Cys-97, and Cys-91/Cys-102. Residues Tyr-43, Gly-45, and Gly-47 each contribute to the Ca(2+) site. His-63 is a catalytic residue. Asp-64 serves as a coordination point for Ca(2+). Asp-105 is a catalytic residue.

Requires Ca(2+) as cofactor. Expressed by the venom gland.

It localises to the secreted. The catalysed reaction is a 1,2-diacyl-sn-glycero-3-phosphocholine + H2O = a 1-acyl-sn-glycero-3-phosphocholine + a fatty acid + H(+). Its function is as follows. Exhibits high hydrolytic activities and shows strong preference for the anionic micelles (dPPC with deoxycholate) to the zwitterionic micelles (dPPC with Triton X-100). PLA2 catalyzes the calcium-dependent hydrolysis of the 2-acyl groups in 3-sn-phosphoglycerides. This chain is Basic phospholipase A2 DsM-b1/DsM-b1', found in Daboia siamensis (Eastern Russel's viper).